The sequence spans 332 residues: D-lactate dehydrogenase (332 aa).

NAD(+) contacts are provided by residues 155 to 156 (RI), Asp175, 206 to 207 (VP), Asn212, 233 to 235 (FAR), and Asp259. Residue Arg235 is part of the active site. The active site involves Glu264. His296 serves as the catalytic Proton donor.

The protein belongs to the D-isomer specific 2-hydroxyacid dehydrogenase family.

The catalysed reaction is (R)-lactate + NAD(+) = pyruvate + NADH + H(+). The chain is D-lactate dehydrogenase (ldhD) from Lactiplantibacillus plantarum (strain ATCC BAA-793 / NCIMB 8826 / WCFS1) (Lactobacillus plantarum).